Here is a 210-residue protein sequence, read N- to C-terminus: ATP phosphoribosyltransferase (210 aa).

Belongs to the ATP phosphoribosyltransferase family. Short subfamily. As to quaternary structure, heteromultimer composed of HisG and HisZ subunits.

The protein resides in the cytoplasm. The catalysed reaction is 1-(5-phospho-beta-D-ribosyl)-ATP + diphosphate = 5-phospho-alpha-D-ribose 1-diphosphate + ATP. It participates in amino-acid biosynthesis; L-histidine biosynthesis; L-histidine from 5-phospho-alpha-D-ribose 1-diphosphate: step 1/9. In terms of biological role, catalyzes the condensation of ATP and 5-phosphoribose 1-diphosphate to form N'-(5'-phosphoribosyl)-ATP (PR-ATP). Has a crucial role in the pathway because the rate of histidine biosynthesis seems to be controlled primarily by regulation of HisG enzymatic activity. The polypeptide is ATP phosphoribosyltransferase (Bacillus cytotoxicus (strain DSM 22905 / CIP 110041 / 391-98 / NVH 391-98)).